The chain runs to 71 residues: Brevinin-1SN2 (71 aa).

The N-terminal stretch at 1–22 (MFTMKKSLLLIFFLGTINLSLC) is a signal peptide. Residues 23–45 (EEERNADEDEKRDGDDESDVEVQ) constitute a propeptide, removed in mature form. The cysteines at positions 65 and 71 are disulfide-linked.

Belongs to the frog skin active peptide (FSAP) family. Brevinin subfamily. In terms of tissue distribution, expressed by the skin glands.

It localises to the secreted. In terms of biological role, antimicrobial peptide. Active against a variety of Gram-negative and Gram-positive bacterial strains. Active against fungus C.glabrata 090902 and C.albicans ATCC 10231. Shows hemolytic activity against human erythrocytes. The sequence is that of Brevinin-1SN2 from Sylvirana spinulosa (Fine-spined frog).